Consider the following 341-residue polypeptide: L-threonine 3-dehydrogenase (341 aa).

Cys-38 is a binding site for Zn(2+). Catalysis depends on charge relay system residues Thr-40 and His-43. Zn(2+)-binding residues include His-63, Glu-64, Cys-93, Cys-96, Cys-99, and Cys-107. Residues Ile-175, Asp-195, Arg-200, 262-264 (LGI), and 286-287 (IY) contribute to the NAD(+) site.

The protein belongs to the zinc-containing alcohol dehydrogenase family. As to quaternary structure, homotetramer. Requires Zn(2+) as cofactor.

It is found in the cytoplasm. The catalysed reaction is L-threonine + NAD(+) = (2S)-2-amino-3-oxobutanoate + NADH + H(+). It participates in amino-acid degradation; L-threonine degradation via oxydo-reductase pathway; glycine from L-threonine: step 1/2. Its function is as follows. Catalyzes the NAD(+)-dependent oxidation of L-threonine to 2-amino-3-ketobutyrate. The chain is L-threonine 3-dehydrogenase from Klebsiella pneumoniae (strain 342).